The primary structure comprises 113 residues: Large ribosomal subunit protein bL19 (113 aa).

This sequence belongs to the bacterial ribosomal protein bL19 family.

In terms of biological role, this protein is located at the 30S-50S ribosomal subunit interface and may play a role in the structure and function of the aminoacyl-tRNA binding site. This is Large ribosomal subunit protein bL19 from Mycobacteroides abscessus (strain ATCC 19977 / DSM 44196 / CCUG 20993 / CIP 104536 / JCM 13569 / NCTC 13031 / TMC 1543 / L948) (Mycobacterium abscessus).